A 150-amino-acid chain; its full sequence is Nucleoside diphosphate kinase (150 aa).

ATP is bound by residues Lys10, Phe58, Arg86, Thr92, Arg103, and Asn113. His116 (pros-phosphohistidine intermediate) is an active-site residue.

Belongs to the NDK family. It depends on Mg(2+) as a cofactor.

Its subcellular location is the cytoplasm. The enzyme catalyses a 2'-deoxyribonucleoside 5'-diphosphate + ATP = a 2'-deoxyribonucleoside 5'-triphosphate + ADP. It carries out the reaction a ribonucleoside 5'-diphosphate + ATP = a ribonucleoside 5'-triphosphate + ADP. Functionally, major role in the synthesis of nucleoside triphosphates other than ATP. The ATP gamma phosphate is transferred to the NDP beta phosphate via a ping-pong mechanism, using a phosphorylated active-site intermediate. The polypeptide is Nucleoside diphosphate kinase (Methanobrevibacter smithii (strain ATCC 35061 / DSM 861 / OCM 144 / PS)).